A 70-amino-acid polypeptide reads, in one-letter code: Large ribosomal subunit protein bL31 (70 aa).

Zn(2+) contacts are provided by C16, C18, C37, and C40.

The protein belongs to the bacterial ribosomal protein bL31 family. Type A subfamily. As to quaternary structure, part of the 50S ribosomal subunit. It depends on Zn(2+) as a cofactor.

Its function is as follows. Binds the 23S rRNA. This chain is Large ribosomal subunit protein bL31, found in Colwellia psychrerythraea (strain 34H / ATCC BAA-681) (Vibrio psychroerythus).